A 125-amino-acid chain; its full sequence is MHELSMAQGIINAVIDTAESNNATEVTEVGIEIGRLAMINPEQLRFMLSVLVENTIVEDADIKIEEIPVEINCPECGFKGVAELDDKDHYAPIVECPKCGNKRISILNGKDCVVKNIVIEKPDDD.

Histidine 2 is a binding site for Ni(2+). Residues cysteine 73, cysteine 76, cysteine 96, and cysteine 99 each contribute to the Zn(2+) site.

It belongs to the HypA/HybF family.

Involved in the maturation of [NiFe] hydrogenases. Required for nickel insertion into the metal center of the hydrogenase. This Methanobrevibacter smithii (strain ATCC 35061 / DSM 861 / OCM 144 / PS) protein is Hydrogenase maturation factor HypA.